Consider the following 203-residue polypeptide: Sarcosine oxidase subunit gamma (203 aa).

This sequence belongs to the SoxG family. In terms of assembly, heterotetramer composed of subunits alpha (SoxA), beta (SoxB), gamma (SoxG) and delta (SoxD).

The protein localises to the cytoplasm. The enzyme catalyses sarcosine + (6S)-5,6,7,8-tetrahydrofolate + O2 = (6R)-5,10-methylene-5,6,7,8-tetrahydrofolate + glycine + H2O2. It carries out the reaction sarcosine + O2 + H2O = formaldehyde + glycine + H2O2. Functionally, in the presence of tetrahydrofolate, catalyzes the oxidative demethylation of sarcosine to yield glycine, 5,10-methylenetetrahydrofolate and hydrogen peroxide. In the absence of tetrahydrofolate, catalyzes the oxidative demethylation of sarcosine to yield glycine, formaldehyde and hydrogen peroxide. The sequence is that of Sarcosine oxidase subunit gamma from Corynebacterium sp. (strain P-1).